The following is a 239-amino-acid chain: Proteasome subunit beta type-6 (239 aa).

Residue alanine 2 is modified to N-acetylalanine. Residues 2-34 (AATLLAARGAGPAPAWGPEAFTPDWESREVSTG) constitute a propeptide, removed in mature form. Threonine 35 functions as the Nucleophile in the catalytic mechanism. A Phosphothreonine modification is found at threonine 69.

The protein belongs to the peptidase T1B family. The 26S proteasome consists of a 20S proteasome core and two 19S regulatory subunits. The 20S proteasome core is a barrel-shaped complex made of 28 subunits that are arranged in four stacked rings. The two outer rings are each formed by seven alpha subunits, and the two inner rings are formed by seven beta subunits. The proteolytic activity is exerted by three beta-subunits PSMB5, PSMB6 and PSMB7. In terms of assembly, (Microbial infection) Interacts with HIV-1 protein Tat.

The protein resides in the cytoplasm. It localises to the nucleus. It catalyses the reaction Cleavage of peptide bonds with very broad specificity.. In terms of biological role, component of the 20S core proteasome complex involved in the proteolytic degradation of most intracellular proteins. This complex plays numerous essential roles within the cell by associating with different regulatory particles. Associated with two 19S regulatory particles, forms the 26S proteasome and thus participates in the ATP-dependent degradation of ubiquitinated proteins. The 26S proteasome plays a key role in the maintenance of protein homeostasis by removing misfolded or damaged proteins that could impair cellular functions, and by removing proteins whose functions are no longer required. Associated with the PA200 or PA28, the 20S proteasome mediates ubiquitin-independent protein degradation. This type of proteolysis is required in several pathways including spermatogenesis (20S-PA200 complex) or generation of a subset of MHC class I-presented antigenic peptides (20S-PA28 complex). Within the 20S core complex, PSMB6 displays a peptidylglutamyl-hydrolizing activity also termed postacidic or caspase-like activity, meaning that the peptides bond hydrolysis occurs directly after acidic residues. The protein is Proteasome subunit beta type-6 of Homo sapiens (Human).